We begin with the raw amino-acid sequence, 405 residues long: Acetate kinase (405 aa).

A Mg(2+)-binding site is contributed by asparagine 13. Lysine 20 serves as a coordination point for ATP. Residue arginine 94 coordinates substrate. Residue aspartate 153 is the Proton donor/acceptor of the active site. ATP-binding positions include 213 to 217 (HLGNG), 288 to 290 (DFR), and 336 to 340 (GIGEN). Glutamate 390 contributes to the Mg(2+) binding site.

Belongs to the acetokinase family. Homodimer. The cofactor is Mg(2+). Requires Mn(2+) as cofactor.

Its subcellular location is the cytoplasm. The enzyme catalyses acetate + ATP = acetyl phosphate + ADP. The protein operates within metabolic intermediate biosynthesis; acetyl-CoA biosynthesis; acetyl-CoA from acetate: step 1/2. Functionally, catalyzes the formation of acetyl phosphate from acetate and ATP. Can also catalyze the reverse reaction. The chain is Acetate kinase from Buchnera aphidicola subsp. Acyrthosiphon pisum (strain APS) (Acyrthosiphon pisum symbiotic bacterium).